The chain runs to 442 residues: Putative nucleotide-sugar transporter YMD8 (442 aa).

The Cytoplasmic segment spans residues 1 to 3; it reads MNR. The chain crosses the membrane as a helical span at residues 4 to 24; sequence TVFLAFVFGWYFCSIALSIYN. At 25–32 the chain is on the extracellular side; sequence RWMFDPKD. The helical transmembrane segment at 33-53 threads the bilayer; it reads GLGIGYPVLVTTFHQATLWLL. Residues 54–76 lie on the Cytoplasmic side of the membrane; it reads SGIYIKLRHKPVKNVLRKNNGFN. The chain crosses the membrane as a helical span at residues 77 to 97; that stretch reads WSFFLKFLLPTAVASAGDIGL. The Extracellular segment spans residues 98–107; that stretch reads SNVSFQYVPL. N-linked (GlcNAc...) asparagine glycosylation occurs at Asn-99. A helical membrane pass occupies residues 108–128; sequence TIYTIIKSSSIAFVLLFGCIF. The Cytoplasmic segment spans residues 129–132; that stretch reads KLEK. A helical transmembrane segment spans residues 133–153; sequence FHWKLALSVIIMFVGVALMVF. The Extracellular portion of the chain corresponds to 154–166; sequence KPSDSTSTKNDQA. Residues 167–187 form a helical membrane-spanning segment; sequence LVIFGSFLVLASSCLSGLRWV. Residues 188-254 are Cytoplasmic-facing; it reads YTQLMLRNNP…PIHTIHQLAP (67 aa). Residue Ser-209 is modified to Phosphoserine. The chain crosses the membrane as a helical span at residues 255–275; sequence IMGITLLLTSLLVEKPFPGIF. Residues 276–301 are Extracellular-facing; the sequence is SSSIFRLDTSNGGVGTETTVLSIVRG. Residues 302-322 form a helical membrane-spanning segment; that stretch reads IVLLILPGFAVFLLTICEFSI. The Cytoplasmic portion of the chain corresponds to 323–329; it reads LEQTPVL. A helical transmembrane segment spans residues 330 to 350; that stretch reads TVSIVGIVKELLTVIFGIIIL. At 351–355 the chain is on the extracellular side; it reads SERLS. Residues 356–376 form a helical membrane-spanning segment; it reads GFYNWLGMLIIMADVCYYNYF. Over 377–442 the chain is Cytoplasmic; sequence RYKQDLLQKY…QNVSRSSQQV (66 aa).

It belongs to the TPT transporter family. SLC35C subfamily.

It localises to the golgi apparatus membrane. Its subcellular location is the cytoplasmic vesicle. It is found in the COPI-coated vesicle membrane. This is Putative nucleotide-sugar transporter YMD8 (YMD8) from Saccharomyces cerevisiae (strain ATCC 204508 / S288c) (Baker's yeast).